The primary structure comprises 535 residues: Pre-mRNA-splicing factor SLU7-A (535 aa).

Residues 21–44 (EEARKAGLAPAEVDEDGKEINPHI) form a disordered region. A CCHC-type zinc finger spans residues 96–109 (CQNCGAMTHTAKAC). Residues 176–190 (LKKLEEKNNNEKGDD) are compositionally biased toward basic and acidic residues. Disordered regions lie at residues 176 to 204 (LKKLEEKNNNEKGDDANSDGEEDEDDLRV) and 489 to 508 (EDLSRREEKDERKRKYNVKY). The span at 191 to 203 (ANSDGEEDEDDLR) shows a compositional bias: acidic residues. Ser-193 carries the phosphoserine modification. The Nuclear localization signal signature appears at 486-493 (LKKEDLSR). Residues 489-501 (EDLSRREEKDERK) show a composition bias toward basic and acidic residues.

It belongs to the SLU7 family. In terms of tissue distribution, mainly expressed in tissues undergoing cell proliferation, particularly in lateral organs.

It localises to the nucleus. In terms of biological role, participates in the second catalytic step of pre-mRNA splicing, when the free hydroxyl group of exon I attacks the 3'-splice site to generate spliced mRNA and the excised lariat intron. Together with SMP2, involved in the timing of cell cycle arrest during leaf development, in a STRUWWELPETER (SWP) dependent manner; promotes cell proliferation in developing organs. This Arabidopsis thaliana (Mouse-ear cress) protein is Pre-mRNA-splicing factor SLU7-A.